Here is a 130-residue protein sequence, read N- to C-terminus: Small ribosomal subunit protein uS9 (130 aa).

It belongs to the universal ribosomal protein uS9 family.

This is Small ribosomal subunit protein uS9 from Streptococcus equi subsp. equi (strain 4047).